The primary structure comprises 259 residues: Indole-3-glycerol phosphate synthase (259 aa).

This sequence belongs to the TrpC family.

It catalyses the reaction 1-(2-carboxyphenylamino)-1-deoxy-D-ribulose 5-phosphate + H(+) = (1S,2R)-1-C-(indol-3-yl)glycerol 3-phosphate + CO2 + H2O. It participates in amino-acid biosynthesis; L-tryptophan biosynthesis; L-tryptophan from chorismate: step 4/5. The polypeptide is Indole-3-glycerol phosphate synthase (Dehalococcoides mccartyi (strain CBDB1)).